An 84-amino-acid polypeptide reads, in one-letter code: Large ribosomal subunit protein bL27 (84 aa).

The disordered stretch occupies residues 1–21 (MAHKKGGGSTKNGRDSNPKYL).

This sequence belongs to the bacterial ribosomal protein bL27 family.

The protein is Large ribosomal subunit protein bL27 of Chlorobium limicola (strain DSM 245 / NBRC 103803 / 6330).